Here is a 301-residue protein sequence, read N- to C-terminus: Recombination-associated protein RdgC (301 aa).

This sequence belongs to the RdgC family.

It is found in the cytoplasm. The protein resides in the nucleoid. In terms of biological role, may be involved in recombination. This chain is Recombination-associated protein RdgC, found in Xanthomonas oryzae pv. oryzae (strain MAFF 311018).